The primary structure comprises 458 residues: tRNA modification GTPase MnmE (458 aa).

(6S)-5-formyl-5,6,7,8-tetrahydrofolate-binding residues include R32, E89, and K128. One can recognise a TrmE-type G domain in the interval 224–381 (GVRVVLAGRP…LCQRLKECAG (158 aa)). N234 contacts K(+). GTP is bound by residues 234–239 (NVGKSS), 253–259 (TDVPGTT), and 278–281 (DTAG). S238 is a binding site for Mg(2+). 3 residues coordinate K(+): T253, V255, and T258. Residue T259 participates in Mg(2+) binding. K458 contacts (6S)-5-formyl-5,6,7,8-tetrahydrofolate.

This sequence belongs to the TRAFAC class TrmE-Era-EngA-EngB-Septin-like GTPase superfamily. TrmE GTPase family. In terms of assembly, homodimer. Heterotetramer of two MnmE and two MnmG subunits. Requires K(+) as cofactor.

Its subcellular location is the cytoplasm. Exhibits a very high intrinsic GTPase hydrolysis rate. Involved in the addition of a carboxymethylaminomethyl (cmnm) group at the wobble position (U34) of certain tRNAs, forming tRNA-cmnm(5)s(2)U34. The polypeptide is tRNA modification GTPase MnmE (Nitrosococcus oceani (strain ATCC 19707 / BCRC 17464 / JCM 30415 / NCIMB 11848 / C-107)).